The following is a 340-amino-acid chain: 4-hydroxythreonine-4-phosphate dehydrogenase (340 aa).

His141 and Thr142 together coordinate substrate. 3 residues coordinate a divalent metal cation: His177, His222, and His277. Residues Lys285, Asn294, and Arg303 each coordinate substrate.

Belongs to the PdxA family. In terms of assembly, homodimer. The cofactor is Zn(2+). Mg(2+) serves as cofactor. It depends on Co(2+) as a cofactor.

The protein resides in the cytoplasm. It catalyses the reaction 4-(phosphooxy)-L-threonine + NAD(+) = 3-amino-2-oxopropyl phosphate + CO2 + NADH. Its pathway is cofactor biosynthesis; pyridoxine 5'-phosphate biosynthesis; pyridoxine 5'-phosphate from D-erythrose 4-phosphate: step 4/5. Catalyzes the NAD(P)-dependent oxidation of 4-(phosphooxy)-L-threonine (HTP) into 2-amino-3-oxo-4-(phosphooxy)butyric acid which spontaneously decarboxylates to form 3-amino-2-oxopropyl phosphate (AHAP). In Maricaulis maris (strain MCS10) (Caulobacter maris), this protein is 4-hydroxythreonine-4-phosphate dehydrogenase.